We begin with the raw amino-acid sequence, 511 residues long: Probable mannosyl-oligosaccharide alpha-1,2-mannosidase 1B (511 aa).

Residues 1-18 (MHLPSLSLAWALAGSSLA) form the signal peptide. N-linked (GlcNAc...) asparagine glycans are attached at residues asparagine 90 and asparagine 177. Cysteine 327 and cysteine 356 are disulfide-bonded. Glutamate 370 acts as the Proton donor in catalysis. The N-linked (GlcNAc...) asparagine glycan is linked to asparagine 433. Threonine 501 is a Ca(2+) binding site.

This sequence belongs to the glycosyl hydrolase 47 family. Monomer. Ca(2+) serves as cofactor. The cofactor is Mg(2+).

The protein localises to the cytoplasmic vesicle lumen. The catalysed reaction is N(4)-(alpha-D-Man-(1-&gt;2)-alpha-D-Man-(1-&gt;2)-alpha-D-Man-(1-&gt;3)-[alpha-D-Man-(1-&gt;2)-alpha-D-Man-(1-&gt;3)-[alpha-D-Man-(1-&gt;2)-alpha-D-Man-(1-&gt;6)]-alpha-D-Man-(1-&gt;6)]-beta-D-Man-(1-&gt;4)-beta-D-GlcNAc-(1-&gt;4)-beta-D-GlcNAc)-L-asparaginyl-[protein] (N-glucan mannose isomer 9A1,2,3B1,2,3) + 4 H2O = N(4)-(alpha-D-Man-(1-&gt;3)-[alpha-D-Man-(1-&gt;3)-[alpha-D-Man-(1-&gt;6)]-alpha-D-Man-(1-&gt;6)]-beta-D-Man-(1-&gt;4)-beta-D-GlcNAc-(1-&gt;4)-beta-D-GlcNAc)-L-asparaginyl-[protein] (N-glucan mannose isomer 5A1,2) + 4 beta-D-mannose. It carries out the reaction N(4)-(alpha-D-Man-(1-&gt;2)-alpha-D-Man-(1-&gt;2)-alpha-D-Man-(1-&gt;3)-[alpha-D-Man-(1-&gt;3)-[alpha-D-Man-(1-&gt;2)-alpha-D-Man-(1-&gt;6)]-alpha-D-Man-(1-&gt;6)]-beta-D-Man-(1-&gt;4)-beta-D-GlcNAc-(1-&gt;4)-beta-D-GlcNAc)-L-asparaginyl-[protein] (N-glucan mannose isomer 8A1,2,3B1,3) + 3 H2O = N(4)-(alpha-D-Man-(1-&gt;3)-[alpha-D-Man-(1-&gt;3)-[alpha-D-Man-(1-&gt;6)]-alpha-D-Man-(1-&gt;6)]-beta-D-Man-(1-&gt;4)-beta-D-GlcNAc-(1-&gt;4)-beta-D-GlcNAc)-L-asparaginyl-[protein] (N-glucan mannose isomer 5A1,2) + 3 beta-D-mannose. The protein operates within protein modification; protein glycosylation. Functionally, involved in the maturation of Asn-linked oligosaccharides. Progressively trims alpha-1,2-linked mannose residues from Man(9)GlcNAc(2) to produce Man(5)GlcNAc(2). The chain is Probable mannosyl-oligosaccharide alpha-1,2-mannosidase 1B (mns1B) from Aspergillus clavatus (strain ATCC 1007 / CBS 513.65 / DSM 816 / NCTC 3887 / NRRL 1 / QM 1276 / 107).